Consider the following 120-residue polypeptide: Glycine cleavage system H protein (120 aa).

A Lipoyl-binding domain is found at 17–99 (VATVGITNYA…QGAGWFFKLK (83 aa)). N6-lipoyllysine is present on lysine 58.

Belongs to the GcvH family. The glycine cleavage system is composed of four proteins: P, T, L and H. Requires (R)-lipoate as cofactor.

The glycine cleavage system catalyzes the degradation of glycine. The H protein shuttles the methylamine group of glycine from the P protein to the T protein. This Rhizobium etli (strain ATCC 51251 / DSM 11541 / JCM 21823 / NBRC 15573 / CFN 42) protein is Glycine cleavage system H protein.